Reading from the N-terminus, the 112-residue chain is Nitrogen regulatory protein GlnK2 (112 aa).

ADP is bound by residues T29, 37-39 (GVQ), V64, and 87-90 (GDGK). ATP-binding positions include T29, 37 to 39 (GVQ), V64, and 87 to 90 (GDGK).

The protein belongs to the P(II) protein family. Homotrimer. Interacts and forms a complex with Amt2.

It is found in the cytoplasm. In terms of biological role, involved in the regulation of nitrogen metabolism. Regulates the activity of its targets by protein-protein interaction in response to the nitrogen status of the cell. Regulates the activity of the ammonia channel Amt2 via direct interaction. In Methanocaldococcus jannaschii (strain ATCC 43067 / DSM 2661 / JAL-1 / JCM 10045 / NBRC 100440) (Methanococcus jannaschii), this protein is Nitrogen regulatory protein GlnK2.